A 131-amino-acid polypeptide reads, in one-letter code: Keratin, high-sulfur matrix protein, IIIA3 (131 aa).

As to expression, wool.

The keratin products of mammalian epidermal derivatives such as wool and hair consist of microfibrils embedded in a rigid matrix of other proteins. The matrix proteins include the high-sulfur and high-tyrosine keratins, having molecular weights of 6-20 kDa, whereas the microfibrils contain the larger, low-sulfur keratins (40-56 kDa). In Ovis aries (Sheep), this protein is Keratin, high-sulfur matrix protein, IIIA3.